Consider the following 323-residue polypeptide: o-succinylbenzoate synthase (323 aa).

The Proton donor role is filled by Lys134. Residues Asp162, Glu191, and Asp214 each coordinate Mg(2+). The Proton acceptor role is filled by Lys236.

The protein belongs to the mandelate racemase/muconate lactonizing enzyme family. MenC type 1 subfamily. Requires a divalent metal cation as cofactor.

The enzyme catalyses (1R,6R)-6-hydroxy-2-succinyl-cyclohexa-2,4-diene-1-carboxylate = 2-succinylbenzoate + H2O. It functions in the pathway quinol/quinone metabolism; 1,4-dihydroxy-2-naphthoate biosynthesis; 1,4-dihydroxy-2-naphthoate from chorismate: step 4/7. Its pathway is quinol/quinone metabolism; menaquinone biosynthesis. Converts 2-succinyl-6-hydroxy-2,4-cyclohexadiene-1-carboxylate (SHCHC) to 2-succinylbenzoate (OSB). The sequence is that of o-succinylbenzoate synthase from Yersinia pseudotuberculosis serotype O:1b (strain IP 31758).